Consider the following 492-residue polypeptide: Ketol-acid reductoisomerase (NADP(+)) (492 aa).

The KARI N-terminal Rossmann domain occupies 14–208; sequence LDQLGRCRFM…GGHKAGVLES (195 aa). NADP(+) contacts are provided by residues 45–48, arginine 68, arginine 76, serine 78, and 108–110; these read CGAQ and DKQ. Residue histidine 132 is part of the active site. Glycine 158 lines the NADP(+) pocket. KARI C-terminal knotted domains are found at residues 209-344 and 345-485; these read SFVA…NAPK and YDGK…MTDM. Mg(2+) contacts are provided by aspartate 217, glutamate 221, glutamate 389, and glutamate 393. Serine 414 provides a ligand contact to substrate.

This sequence belongs to the ketol-acid reductoisomerase family. Requires Mg(2+) as cofactor.

It catalyses the reaction (2R)-2,3-dihydroxy-3-methylbutanoate + NADP(+) = (2S)-2-acetolactate + NADPH + H(+). The catalysed reaction is (2R,3R)-2,3-dihydroxy-3-methylpentanoate + NADP(+) = (S)-2-ethyl-2-hydroxy-3-oxobutanoate + NADPH + H(+). It participates in amino-acid biosynthesis; L-isoleucine biosynthesis; L-isoleucine from 2-oxobutanoate: step 2/4. The protein operates within amino-acid biosynthesis; L-valine biosynthesis; L-valine from pyruvate: step 2/4. Functionally, involved in the biosynthesis of branched-chain amino acids (BCAA). Catalyzes an alkyl-migration followed by a ketol-acid reduction of (S)-2-acetolactate (S2AL) to yield (R)-2,3-dihydroxy-isovalerate. In the isomerase reaction, S2AL is rearranged via a Mg-dependent methyl migration to produce 3-hydroxy-3-methyl-2-ketobutyrate (HMKB). In the reductase reaction, this 2-ketoacid undergoes a metal-dependent reduction by NADPH to yield (R)-2,3-dihydroxy-isovalerate. The chain is Ketol-acid reductoisomerase (NADP(+)) from Haemophilus influenzae (strain PittGG).